We begin with the raw amino-acid sequence, 301 residues long: MRMNQQDTHKENLEFNKLQKKLRRNVGNAITEYNMIEESDVVMACISGGKDSFAMLDILLGLQKSAPINFKVIAVNLDQKQPGFPEHILPNYFESLGIPYYIVDKDTYSVVREKIPEGKTTCGLCSRLRRGTLYSFAEKIGATKIALGHHMDDMVETMFLNMFYGSRLKSMPPKLRSDDQRNVVIRPLTYCREKDLIAYAEYREYPIIPCNLCGSQENLQRQNIKAMLIDWDTQTPGRVESIFKSTQNISPSQLADRNIFDFENLPLDRTGKRAEYEFTEAEVSSSNINIDESMFIDVTNI.

The PP-loop motif motif lies at 47–52; that stretch reads SGGKDS. Cys122, Cys125, and Cys213 together coordinate [4Fe-4S] cluster.

This sequence belongs to the TtcA family. As to quaternary structure, homodimer. Mg(2+) is required as a cofactor. [4Fe-4S] cluster serves as cofactor.

It localises to the cytoplasm. It carries out the reaction cytidine(32) in tRNA + S-sulfanyl-L-cysteinyl-[cysteine desulfurase] + AH2 + ATP = 2-thiocytidine(32) in tRNA + L-cysteinyl-[cysteine desulfurase] + A + AMP + diphosphate + H(+). It participates in tRNA modification. Its function is as follows. Catalyzes the ATP-dependent 2-thiolation of cytidine in position 32 of tRNA, to form 2-thiocytidine (s(2)C32). The sulfur atoms are provided by the cysteine/cysteine desulfurase (IscS) system. The chain is tRNA-cytidine(32) 2-sulfurtransferase from Photobacterium profundum (strain SS9).